Reading from the N-terminus, the 557-residue chain is Formate--tetrahydrofolate ligase 2 (557 aa).

66 to 73 (TPAGEGKT) is a binding site for ATP.

It belongs to the formate--tetrahydrofolate ligase family.

The catalysed reaction is (6S)-5,6,7,8-tetrahydrofolate + formate + ATP = (6R)-10-formyltetrahydrofolate + ADP + phosphate. It participates in one-carbon metabolism; tetrahydrofolate interconversion. This chain is Formate--tetrahydrofolate ligase 2, found in Streptococcus pyogenes serotype M28 (strain MGAS6180).